Here is a 1194-residue protein sequence, read N- to C-terminus: Metabotropic glutamate receptor 1 (1194 aa).

The N-terminal stretch at 1 to 18 (MVGLLLFFFPAIFLEVSL) is a signal peptide. Over 19 to 592 (LPRSPGRKVL…VRYLEWSNIE (574 aa)) the chain is Extracellular. Cysteines 67 and 109 form a disulfide. Y74 contacts L-glutamate. Residue N98 is glycosylated (N-linked (GlcNAc...) asparagine). Residues S165 and 186–188 (SAT) contribute to the L-glutamate site. N223 is a glycosylation site (N-linked (GlcNAc...) asparagine). Y236 is an L-glutamate binding site. C289 and C291 form a disulfide bridge. D318 is a binding site for L-glutamate. C378 and C394 are disulfide-bonded. N-linked (GlcNAc...) asparagine glycosylation is present at N397. Position 409 (K409) interacts with L-glutamate. A disulfide bridge connects residues C432 and C439. Residue N515 is glycosylated (N-linked (GlcNAc...) asparagine). Residues 593–615 (SIIAIAFSCLGILVTLFVTLIFV) traverse the membrane as a helical segment. Residues 616–629 (LYRDTPVVKSSSRE) lie on the Cytoplasmic side of the membrane. A helical transmembrane segment spans residues 630 to 650 (LCYIILAGIFLGYVCPFTLIA). Residues 651 to 658 (KPTTTSCY) lie on the Extracellular side of the membrane. C657 and C746 are disulfide-bonded. A helical membrane pass occupies residues 659–680 (LQRLLVGLSSAMCYSALVTKTN). Residues 681 to 703 (RIARILAGSKKKICTRKPRFMSA) are Cytoplasmic-facing. A helical membrane pass occupies residues 704-727 (WAQVIIASILISVQLTLVVTLIIM). At 728 to 750 (EPPMPILSYPSIKEVYLICNTSN) the chain is on the extracellular side. A helical transmembrane segment spans residues 751-772 (LGVVAPLGYNGLLIMSCTYYAF). The Cytoplasmic portion of the chain corresponds to 773–785 (KTRNVPANFNEAK). Residues 786-807 (YIAFTMYTTCIIWLAFVPIYFG) form a helical membrane-spanning segment. The Extracellular segment spans residues 808 to 815 (SNYKIITT). The helical transmembrane segment at 816–840 (CFAVSLSVTVALGCMFTPKMYIIIA) threads the bilayer. Residues 841–1194 (KPERNVRSAF…RDYKQSSSTL (354 aa)) are Cytoplasmic-facing. A Phosphoserine modification is found at S853. T871 bears the Phosphothreonine mark. The tract at residues 883-905 (AGNANSNGKSVSWSEPGGGQVPK) is disordered. Over residues 885–895 (NANSNGKSVSW) the composition is skewed to polar residues. Phosphoserine is present on residues S894 and S969. A disordered region spans residues 1007-1030 (PALPKGLPPPLQQQQQPPPQQKSL). A compositionally biased stretch (pro residues) spans 1012-1026 (GLPPPLQQQQQPPPQ). S1091 is subject to Phosphoserine. Residues 1113 to 1173 (HEREGNTEED…SPVSESVLCT (61 aa)) are disordered. The span at 1119–1131 (TEEDELEEEEEDL) shows a compositional bias: acidic residues. S1142 carries the phosphoserine modification. T1146 bears the Phosphothreonine mark. S1149 carries the post-translational modification Phosphoserine. A compositionally biased stretch (low complexity) spans 1154–1170 (SVASGSSVPSSPVSESV).

Belongs to the G-protein coupled receptor 3 family. Homodimer; disulfide-linked. The PPXXF motif binds HOMER1, HOMER2 and HOMER3. Interacts with TAMALIN. Interacts with RYR1, RYR2, ITPR1, SHANK1 and SHANK3. Interacts with SIAH1. As to expression, detected in brain.

The protein resides in the cell membrane. The protein localises to the postsynaptic cell membrane. Its subcellular location is the cell projection. It is found in the dendrite. Signaling is inhibited by the antagonist LY341495. The LY341495 binding site partially overlaps with the glutamate binding site. Signaling is also inhibited by synthetic allosteric regulators, such as FITM (4-fluoro-N-(4-(6-(isopropylamino)pyrimidin-4-yl)thiazol-2-yl)-N-methylbenzamide) that bind in a pocket between the transmembrane helices. G-protein coupled receptor for glutamate. Ligand binding causes a conformation change that triggers signaling via guanine nucleotide-binding proteins (G proteins) and modulates the activity of down-stream effectors. Signaling activates a phosphatidylinositol-calcium second messenger system. May participate in the central action of glutamate in the CNS, such as long-term potentiation in the hippocampus and long-term depression in the cerebellum. May function in the light response in the retina. Induces GRID1 and GRID2 cation-channel activation via GNAQ-PLC-PKC pathway in dopaminergic neurons and cerebellar Purkinje cell, respectively. This Homo sapiens (Human) protein is Metabotropic glutamate receptor 1 (GRM1).